We begin with the raw amino-acid sequence, 506 residues long: Pentatricopeptide repeat-containing protein At5g18475 (506 aa).

Positions 28-48 (SEKKKKPSPPPESSISPVETN) are disordered. PPR repeat units lie at residues 88–122 (NNAT…TCRF), 123–158 (QESL…RVKP), 159–194 (SLNA…GLQP), 195–229 (NTCI…GISY), 231–266 (NSIT…GISP), 267–301 (DPVT…GCNP), 302–336 (NVYN…GLKL), 337–371 (DTVG…RCRA), 372–406 (DTLT…GVHL), 407–441 (NKGS…GIWP), 442–476 (HHAT…GLIP), and 477–506 (GPKS…SLVS).

The protein belongs to the PPR family. P subfamily.

This Arabidopsis thaliana (Mouse-ear cress) protein is Pentatricopeptide repeat-containing protein At5g18475.